The following is a 352-amino-acid chain: Ion-translocating oxidoreductase complex subunit D (352 aa).

4 helical membrane-spanning segments follow: residues 20 to 40, 42 to 62, 89 to 109, and 123 to 143; these read IMLLVLLAAVPGIAAQLWFFG, GTLVQILLASVSALLAEALVL, IPPLAPWWMVVLGTVFAVIIA, and PAMIGYVVLLISFPVQMTSWL. T187 is subject to FMN phosphoryl threonine. 5 helical membrane passes run 214–234, 242–262, 267–287, 301–321, and 322–342; these read ILAGAGWQWVNLAWLAGGVWL, WHIPLSFLVTLALCATLGWLF, LASPQIHLLSGATMLGAFFIL, LIFGALAGLLVWLIRSFGGYP, and DGVAFAVLLANITVPLIDYYT.

Belongs to the NqrB/RnfD family. As to quaternary structure, the complex is composed of six subunits: RsxA, RsxB, RsxC, RsxD, RsxE and RsxG. It depends on FMN as a cofactor.

Its subcellular location is the cell inner membrane. In terms of biological role, part of a membrane-bound complex that couples electron transfer with translocation of ions across the membrane. Required to maintain the reduced state of SoxR. The chain is Ion-translocating oxidoreductase complex subunit D from Escherichia coli O17:K52:H18 (strain UMN026 / ExPEC).